A 313-amino-acid chain; its full sequence is Phosphoenolpyruvate phosphomutase (313 aa).

A disordered region spans residues 1-23 (MNATERPGSDGTGSPESVGSRLK). Aspartate 69 acts as the Nucleophile in catalysis.

It belongs to the isocitrate lyase/PEP mutase superfamily. PEP mutase family.

It carries out the reaction phosphoenolpyruvate + H(+) = 3-phosphonopyruvate. It participates in secondary metabolite biosynthesis; bialaphos biosynthesis. Its function is as follows. Formation of a carbon-phosphorus bond by converting phosphoenolpyruvate (PEP) to phosphonopyruvate (P-Pyr). The sequence is that of Phosphoenolpyruvate phosphomutase (ppm) from Streptomyces viridochromogenes (strain DSM 40736 / JCM 4977 / BCRC 1201 / Tue 494).